The primary structure comprises 434 residues: Trigger factor (434 aa).

In terms of domain architecture, PPIase FKBP-type spans 160 to 245 (GDKVKMNFVG…LTEVQAAQLP (86 aa)).

This sequence belongs to the FKBP-type PPIase family. Tig subfamily.

It is found in the cytoplasm. It catalyses the reaction [protein]-peptidylproline (omega=180) = [protein]-peptidylproline (omega=0). Its function is as follows. Involved in protein export. Acts as a chaperone by maintaining the newly synthesized protein in an open conformation. Functions as a peptidyl-prolyl cis-trans isomerase. The polypeptide is Trigger factor (Shewanella denitrificans (strain OS217 / ATCC BAA-1090 / DSM 15013)).